Reading from the N-terminus, the 89-residue chain is Defensin-like protein 78 (89 aa).

The signal sequence occupies residues 1–30 (MANNMVASPYKNTFMMIALVLILLISGSEA). Disulfide bonds link C40–C75, C44–C67, C52–C73, and C56–C74.

Belongs to the DEFL family.

Its subcellular location is the secreted. In Arabidopsis thaliana (Mouse-ear cress), this protein is Defensin-like protein 78.